A 557-amino-acid chain; its full sequence is Dihydroxy-acid dehydratase (557 aa).

Cysteine 49 is a [2Fe-2S] cluster binding site. Aspartate 81 provides a ligand contact to Mg(2+). [2Fe-2S] cluster is bound at residue cysteine 122. Positions 123 and 124 each coordinate Mg(2+). Lysine 124 is subject to N6-carboxylysine. A [2Fe-2S] cluster-binding site is contributed by cysteine 194. Glutamate 446 provides a ligand contact to Mg(2+). The active-site Proton acceptor is serine 472.

This sequence belongs to the IlvD/Edd family. Homodimer. [2Fe-2S] cluster serves as cofactor. Requires Mg(2+) as cofactor.

The catalysed reaction is (2R)-2,3-dihydroxy-3-methylbutanoate = 3-methyl-2-oxobutanoate + H2O. It catalyses the reaction (2R,3R)-2,3-dihydroxy-3-methylpentanoate = (S)-3-methyl-2-oxopentanoate + H2O. It functions in the pathway amino-acid biosynthesis; L-isoleucine biosynthesis; L-isoleucine from 2-oxobutanoate: step 3/4. Its pathway is amino-acid biosynthesis; L-valine biosynthesis; L-valine from pyruvate: step 3/4. Functionally, functions in the biosynthesis of branched-chain amino acids. Catalyzes the dehydration of (2R,3R)-2,3-dihydroxy-3-methylpentanoate (2,3-dihydroxy-3-methylvalerate) into 2-oxo-3-methylpentanoate (2-oxo-3-methylvalerate) and of (2R)-2,3-dihydroxy-3-methylbutanoate (2,3-dihydroxyisovalerate) into 2-oxo-3-methylbutanoate (2-oxoisovalerate), the penultimate precursor to L-isoleucine and L-valine, respectively. In Prochlorococcus marinus (strain MIT 9301), this protein is Dihydroxy-acid dehydratase.